We begin with the raw amino-acid sequence, 102 residues long: Small ribosomal subunit protein uS10 (102 aa).

The protein belongs to the universal ribosomal protein uS10 family. As to quaternary structure, part of the 30S ribosomal subunit.

In terms of biological role, involved in the binding of tRNA to the ribosomes. The polypeptide is Small ribosomal subunit protein uS10 (Methylorubrum populi (strain ATCC BAA-705 / NCIMB 13946 / BJ001) (Methylobacterium populi)).